A 401-amino-acid chain; its full sequence is UDP-GlcNAc:betaGal beta-1,3-N-acetylglucosaminyltransferase 9 (401 aa).

Residues 1-10 (MRRRLRLRRE) are Cytoplasmic-facing. The chain crosses the membrane as a helical; Signal-anchor for type II membrane protein span at residues 11–31 (ALLTLLLGATLGLLLYAQQEG). The Lumenal segment spans residues 32–401 (AAPTTSAPRA…VPAGPFQWGP (370 aa)). Residues 33 to 85 (APTTSAPRAQGRAAPGPTPGLRVFQAPDTGAAPPAYEGDTPEPPTPTGPFDFG) are disordered. Low complexity predominate over residues 38 to 47 (APRAQGRAAP).

This sequence belongs to the glycosyltransferase 31 family.

It is found in the golgi apparatus membrane. In Bos taurus (Bovine), this protein is UDP-GlcNAc:betaGal beta-1,3-N-acetylglucosaminyltransferase 9.